A 547-amino-acid chain; its full sequence is Leiomodin-2 (547 aa).

Residues 1-47 (MSTFGYRRGLSKYESIDEDELLASLSAEELKELERELEDIEPDRNLP) form an interaction with tropomyosin alpha region. Interaction with actin regions lie at residues 1–161 (MSTF…SDNS), 162–497 (KPKI…KEIK), and 521–540 (AHEN…LKRV). 3 positions are modified to phosphoserine: Ser11, Ser15, and Ser24. A coiled-coil region spans residues 16-41 (IDEDELLASLSAEELKELERELEDIE). 2 disordered regions span residues 91–162 (KVAE…DNSK) and 352–533 (MDKQ…RGSS). Composition is skewed to acidic residues over residues 95 to 104 (DKEESEEELI) and 112 to 139 (VSEE…EEER). Residues 113–148 (SEEVYTEEEEEESQEEEEEEDSDEEERTIETAKGIN) adopt a coiled-coil conformation. The span at 149–160 (GTVNYDSVNSDN) shows a compositional bias: polar residues. Residues 352–367 (MDKQRQKRLQEQKQQE) show a composition bias toward basic and acidic residues. A Phosphoserine modification is found at Ser400. Pro residues predominate over residues 419 to 449 (ATPPPPPPPPPPPPPSSQRLPPPPPPPPPPL). Residues 465 to 475 (QQESAQRALQN) show a composition bias toward polar residues. Basic residues predominate over residues 477–487 (QKKKKGKKVKK). Over residues 494 to 512 (KEIKNSLRSVQEKKMEDSS) the composition is skewed to basic and acidic residues. In terms of domain architecture, WH2 spans 521-540 (AHENLMEAIRGSSIKQLKRV).

This sequence belongs to the tropomodulin family. In terms of assembly, can bind at least three actin monomers and thereby provides a nucleus for actin filament formation. Interacts (via N-terminus) with tropomyosin alpha (TPM1) (via N-terminus). May also interact with TPM2 (via N-terminus). Interacts with FLII. As to expression, specifically expressed in heart and skeletal muscles, with higher levels in heart (at protein level). Not expressed in other tissues.

Its subcellular location is the cytoplasm. It localises to the myofibril. The protein localises to the sarcomere. The protein resides in the m line. It is found in the cytoskeleton. Functionally, mediates nucleation of actin filaments and thereby promotes actin polymerization. Plays a role in the regulation of actin filament length. Required for normal sarcomere organization in the heart, and for normal heart function. The protein is Leiomodin-2 (LMOD2) of Homo sapiens (Human).